The following is a 262-amino-acid chain: 14-3-3-like protein B (262 aa).

It belongs to the 14-3-3 family.

The protein is 14-3-3-like protein B of Hordeum vulgare (Barley).